A 429-amino-acid polypeptide reads, in one-letter code: Histidine--tRNA ligase (429 aa).

Belongs to the class-II aminoacyl-tRNA synthetase family. Homodimer.

Its subcellular location is the cytoplasm. It catalyses the reaction tRNA(His) + L-histidine + ATP = L-histidyl-tRNA(His) + AMP + diphosphate + H(+). In Pseudomonas aeruginosa (strain LESB58), this protein is Histidine--tRNA ligase.